Reading from the N-terminus, the 276-residue chain is Methylesterase 17 (276 aa).

The AB hydrolase-1 domain occupies Pro19–Pro138. The active-site Acyl-ester intermediate is Ser95. Residues Asp225 and His252 each act as charge relay system in the active site.

Belongs to the AB hydrolase superfamily. Methylesterase family. In terms of tissue distribution, expressed in several tissues of seedlings and adult plants, with a higher relative level of expression in the seedling shoot apex and the adult stem.

The catalysed reaction is methyl (indol-3-yl)acetate + H2O = (indol-3-yl)acetate + methanol + H(+). Its pathway is plant hormone biosynthesis. In terms of biological role, methylesterase that efficiently and specifically hydrolyzes methyl indole-3-acetic acid (MeIAA) to IAA (auxin). MeIAA is believed to be an inactive form of auxin that needs to be demethylated to exert a biological effect. This is Methylesterase 17 from Arabidopsis thaliana (Mouse-ear cress).